The primary structure comprises 106 residues: Putative regulatory protein MalR (106 aa).

In terms of domain architecture, HTH hxlR-type spans C12–N106.

In terms of biological role, potential regulator of the malBH genes. This chain is Putative regulatory protein MalR (malR), found in Fusobacterium mortiferum.